Reading from the N-terminus, the 264-residue chain is 3-methyl-2-oxobutanoate hydroxymethyltransferase (264 aa).

2 residues coordinate Mg(2+): Asp-45 and Asp-84. 3-methyl-2-oxobutanoate-binding positions include 45 to 46, Asp-84, and Lys-112; that span reads DS. A Mg(2+)-binding site is contributed by Glu-114. Glu-181 (proton acceptor) is an active-site residue.

It belongs to the PanB family. In terms of assembly, homodecamer; pentamer of dimers. Mg(2+) is required as a cofactor.

It localises to the cytoplasm. It catalyses the reaction 3-methyl-2-oxobutanoate + (6R)-5,10-methylene-5,6,7,8-tetrahydrofolate + H2O = 2-dehydropantoate + (6S)-5,6,7,8-tetrahydrofolate. The protein operates within cofactor biosynthesis; (R)-pantothenate biosynthesis; (R)-pantoate from 3-methyl-2-oxobutanoate: step 1/2. In terms of biological role, catalyzes the reversible reaction in which hydroxymethyl group from 5,10-methylenetetrahydrofolate is transferred onto alpha-ketoisovalerate to form ketopantoate. The sequence is that of 3-methyl-2-oxobutanoate hydroxymethyltransferase from Shewanella denitrificans (strain OS217 / ATCC BAA-1090 / DSM 15013).